The primary structure comprises 292 residues: MNPADLPDTLDVAPLTGETGEPCSFGILIKPCRAGRHIGELSVTWLRALVYSHQLVVLRGFDHFASSDSLTRYCATFGEIMMWPYGAVLELVEHANPDDHIFANSYVPLHWDGMYLDTVPEFQLFQCVHAAGDMQGGRTTFSSTNAALRIATPAVRELWARAHGRYQRSVELYSNTVEAPIIGIHPLREFPVIRFCEPPDENDATFLNPSSYSFGGINKDEEEMLLVSLMKTLRDPRVYYAHQWQTGDFVLSDNLSLLHGREQYTHHSGRHLRRVHIHGRPQIANHHLVRSE.

The Fe cation site is built by His110, Asp112, and His259.

This sequence belongs to the TfdA dioxygenase family. Fe(2+) serves as cofactor.

The catalysed reaction is (2S)-3-(4-hydroxyphenyl)-2-isocyanopropanoate + 2-oxoglutarate + O2 = (2E)-3-(4-hydroxyphenyl)-2-isocyanoprop-2-enoate + succinate + CO2 + H2O. In terms of biological role, catalyzes the 2-oxoglutarate-dependent oxidation of tyrosine isonitrile. The sequence is that of Tyrosine isonitrile desaturase from Erwinia amylovora (strain CFBP1430).